Consider the following 161-residue polypeptide: Regulator of ribonuclease activity A (161 aa).

The protein belongs to the RraA family. Homotrimer. Binds to both RNA-binding sites in the C-terminal region of Rne and to RhlB.

It is found in the cytoplasm. Its function is as follows. Globally modulates RNA abundance by binding to RNase E (Rne) and regulating its endonucleolytic activity. Can modulate Rne action in a substrate-dependent manner by altering the composition of the degradosome. Modulates RNA-binding and helicase activities of the degradosome. The chain is Regulator of ribonuclease activity A from Pectobacterium atrosepticum (strain SCRI 1043 / ATCC BAA-672) (Erwinia carotovora subsp. atroseptica).